The primary structure comprises 241 residues: Uridylate kinase (241 aa).

15 to 18 lines the ATP pocket; it reads KMSG. Residues 23 to 28 are involved in allosteric activation by GTP; that stretch reads GAEGFG. G57 is a UMP binding site. ATP-binding residues include G58 and R62. Residues D77 and 138-145 contribute to the UMP site; that span reads TGNPLFTT. Residues T165, F171, and D174 each coordinate ATP.

Belongs to the UMP kinase family. As to quaternary structure, homohexamer.

Its subcellular location is the cytoplasm. The enzyme catalyses UMP + ATP = UDP + ADP. The protein operates within pyrimidine metabolism; CTP biosynthesis via de novo pathway; UDP from UMP (UMPK route): step 1/1. Its activity is regulated as follows. Allosterically activated by GTP. Inhibited by UTP. Functionally, catalyzes the reversible phosphorylation of UMP to UDP. In Blochmanniella pennsylvanica (strain BPEN), this protein is Uridylate kinase.